A 375-amino-acid polypeptide reads, in one-letter code: Secondary metabolism regulator laeA (375 aa).

Positions 15-26 (ASPNRNNYSYQG) are enriched in polar residues. Disordered regions lie at residues 15–37 (ASPNRNNYSYQGIESYDSGRSRQ) and 50–75 (QEPPREPPDNNDPYDGHGGPAGTSHY).

Belongs to the methyltransferase superfamily. LaeA methyltransferase family. In terms of assembly, component of the heterotrimeric velvet complex composed of laeA, veA and velB; VeA acting as a bridging protein between laeA and velB.

It is found in the nucleus. The catalysed reaction is L-methionyl-[protein] + S-adenosyl-L-methionine = S-methyl-L-methionyl-[protein] + S-adenosyl-L-homocysteine. Functionally, methyltransferase that performs automethylation. No other methyl-accepting substrate has been identified yet. Component of the velvet transcription factor complex that acts as a global regulator for secondary metabolite gene expression. Controls the expression of the citric acid, demethylkotanin, orlandin, asperrubrol, tensidol B, atromentin and JBIR8 gene clusters. Also represses the expression of genes related to the production of BMS-192548 and aspernigrin A. The protein is Secondary metabolism regulator laeA of Aspergillus niger (strain ATCC 1015 / CBS 113.46 / FGSC A1144 / LSHB Ac4 / NCTC 3858a / NRRL 328 / USDA 3528.7).